Here is a 277-residue protein sequence, read N- to C-terminus: Phosphonoacetaldehyde hydrolase-like protein (277 aa).

The protein belongs to the HAD-like hydrolase superfamily. PhnX family.

This chain is Phosphonoacetaldehyde hydrolase-like protein (phnX2), found in Syntrophobacter fumaroxidans (strain DSM 10017 / MPOB).